Consider the following 488-residue polypeptide: NADH-quinone oxidoreductase subunit N 2 (488 aa).

14 consecutive transmembrane segments (helical) span residues 18–38 (FLPE…ELFI), 45–65 (LVLN…LLIP), 81–101 (PLAV…LPFA), 110–130 (SFYG…FVLA), 135–155 (LIIL…LTAL), 169–189 (YLIL…FMYI), 210–230 (LVLG…AVPF), 242–262 (PTPV…IPLV), 274–294 (LVWT…GNLV), 308–328 (SSIA…VIGM), 331–351 (VIYF…VLAL), 375–395 (IAFA…TVGF), 412–434 (WLAF…LVVV), and 458–478 (FALT…WFLI).

Belongs to the complex I subunit 2 family. In terms of assembly, NDH-1 is composed of 14 different subunits. Subunits NuoA, H, J, K, L, M, N constitute the membrane sector of the complex.

The protein resides in the cell inner membrane. The enzyme catalyses a quinone + NADH + 5 H(+)(in) = a quinol + NAD(+) + 4 H(+)(out). Functionally, NDH-1 shuttles electrons from NADH, via FMN and iron-sulfur (Fe-S) centers, to quinones in the respiratory chain. The immediate electron acceptor for the enzyme in this species is believed to be ubiquinone. Couples the redox reaction to proton translocation (for every two electrons transferred, four hydrogen ions are translocated across the cytoplasmic membrane), and thus conserves the redox energy in a proton gradient. The protein is NADH-quinone oxidoreductase subunit N 2 of Aquifex aeolicus (strain VF5).